The primary structure comprises 313 residues: Secreted mono- and diacylglycerol lipase MDL5 (313 aa).

The N-terminal stretch at 1–20 (MQLQYVLTLLWIIFAQNVFS) is a signal peptide. Cysteine 66 and cysteine 306 form a disulfide bridge. 2 N-linked (GlcNAc...) asparagine glycosylation sites follow: asparagine 72 and asparagine 111. The active-site Nucleophile is serine 180. Aspartate 238 is a catalytic residue. N-linked (GlcNAc...) asparagine glycosylation occurs at asparagine 263. The active site involves histidine 290.

Belongs to the AB hydrolase superfamily. Lipase family. Class 3 subfamily.

The protein localises to the secreted. It localises to the cell wall. The catalysed reaction is a monoacylglycerol + H2O = glycerol + a fatty acid + H(+). It carries out the reaction a diacylglycerol + H2O = a monoacylglycerol + a fatty acid + H(+). In terms of biological role, secreted lipase involved in Dandruff and seborrheic dermatitis (D/SD) probably via lipase-mediated breakdown of sebaceous lipids and release of irritating free fatty acids. Shows activity against monoglyceride and diglyceride substrates, but not triglyceride substrates and does not exhibit regio-selective production of diacylglycerols. Cleaves oleic acid from 1,2 isomers of diolein on both the 1 and the 2 position of the glycerol backbone, resulting mainly in free fatty acids but no monoolein is detected. Shows activity on monoolein and liberates mostly free fatty acids, but can also perform the reverse reaction and produce diolein. This Malassezia globosa (strain ATCC MYA-4612 / CBS 7966) (Dandruff-associated fungus) protein is Secreted mono- and diacylglycerol lipase MDL5.